The chain runs to 139 residues: Transcription antitermination protein NusB (139 aa).

Belongs to the NusB family.

Involved in transcription antitermination. Required for transcription of ribosomal RNA (rRNA) genes. Binds specifically to the boxA antiterminator sequence of the ribosomal RNA (rrn) operons. The chain is Transcription antitermination protein NusB from Pectobacterium carotovorum subsp. carotovorum (strain PC1).